Reading from the N-terminus, the 86-residue chain is Large ribosomal subunit protein bL31B (86 aa).

The protein belongs to the bacterial ribosomal protein bL31 family. Type B subfamily. As to quaternary structure, part of the 50S ribosomal subunit.

The sequence is that of Large ribosomal subunit protein bL31B from Streptococcus agalactiae serotype III (strain NEM316).